We begin with the raw amino-acid sequence, 913 residues long: Chitin synthase 1 (913 aa).

The interval 1–27 is disordered; the sequence is MSGAPPPSSGFAPRSYGQQPLSHAPRS. UDP-N-acetyl-alpha-D-glucosamine contacts are provided by threonine 237, glutamate 241, and aspartate 291. An N-linked (GlcNAc...) asparagine glycan is attached at asparagine 420. Residue aspartate 496 is part of the active site. Asparagine 510 carries N-linked (GlcNAc...) asparagine glycosylation. 6 consecutive transmembrane segments (helical) span residues 539 to 559, 581 to 601, 625 to 645, 658 to 678, 684 to 704, and 711 to 731; these read WLNGAFFATLFSIWNWGRIYS, YTAFGFFLPANLYLALFFIVF, AVYIYNFSYLFGLLMLIIIGL, FVGAVFGLMMMLSSLVGAGIF, TVHSIVVSILTVGVYFIASAL, and IFMTFTHYTALIPSFVNIFTI. The Conserved SWG motif motif lies at 741 to 743; it reads SWG. 2 consecutive transmembrane segments (helical) span residues 800 to 820 and 825 to 845; these read VLLTWAFSNLIFALFVVYFAS and MPVLYIFVASLNTCRLLGSIG. N-linked (GlcNAc...) asparagine glycans are attached at residues asparagine 867 and asparagine 900.

Belongs to the chitin synthase family. Class II subfamily. Homodimer. Requires Mn(2+) as cofactor.

The protein resides in the cell membrane. The enzyme catalyses [(1-&gt;4)-N-acetyl-beta-D-glucosaminyl](n) + UDP-N-acetyl-alpha-D-glucosamine = [(1-&gt;4)-N-acetyl-beta-D-glucosaminyl](n+1) + UDP + H(+). Its activity is regulated as follows. The activity is inhibited by nikkomycin Z (NikZ). Polymerizes chitin, a structural polymer of the cell wall and septum, by transferring the sugar moiety of UDP-GlcNAc to the non-reducing end of the growing chitin polymer. Involved in mycelial growth, sporangial production, zoospore release and pathogenesis. In Phytophthora sojae (strain P6497) (Soybean stem and root rot agent), this protein is Chitin synthase 1.